A 631-amino-acid chain; its full sequence is Pro-interleukin-16 (631 aa).

Disordered regions lie at residues 30-269 (ENPG…FPLT) and 317-344 (PKEG…ASDT). Residues 132–144 (SSSSSSIKQRISS) show a composition bias toward low complexity. S221 carries the phosphoserine modification. A compositionally biased stretch (polar residues) spans 322–344 (SPTSSSNEDSAANGSAETSASDT). The interaction with PPP1R12A, PPP1R12B and PPP1R12C stretch occupies residues 405–501 (KQLDSIHVTI…IVTRKLTAES (97 aa)). 2 consecutive PDZ domains span residues 411 to 496 (HVTI…VTRK) and 533 to 618 (TVTL…IRRK).

In terms of assembly, homotetramer. Pro-interleukin-16 interacts (via PDZ 2 domain) with PPP1R12A, PPP1R12B and PPP1R12C. Pro-interleukin-16 interacts with GRIN2A. Pro-interleukin-16 interacts with GABPB1. Pro-interleukin-16 interacts (via PDZ 3 domain) with HDAC3.

It is found in the secreted. Its subcellular location is the cytoplasm. The protein resides in the nucleus. In terms of biological role, interleukin-16 stimulates a migratory response in CD4+ lymphocytes, monocytes, and eosinophils. Primes CD4+ T-cells for IL-2 and IL-15 responsiveness. Also induces T-lymphocyte expression of interleukin 2 receptor. Ligand for CD4. Its function is as follows. Pro-interleukin-16 is involved in cell cycle progression in T-cells. Appears to be involved in transcriptional regulation of SKP2 and is probably part of a transcriptional repression complex on the core promoter of the SKP2 gene. May act as a scaffold for GABPB1 (the DNA-binding subunit the GABP transcription factor complex) and HDAC3 thus maintaining transcriptional repression and blocking cell cycle progression in resting T-cells. This chain is Pro-interleukin-16 (IL16), found in Chlorocebus aethiops (Green monkey).